The sequence spans 265 residues: Tryptophan 2,3-dioxygenase (265 aa).

Substrate contacts are provided by residues 38–42 (FIVVH) and arginine 104. Residue histidine 223 participates in heme binding. Threonine 237 contributes to the substrate binding site.

Belongs to the tryptophan 2,3-dioxygenase family. Homotetramer. It depends on heme as a cofactor.

It catalyses the reaction L-tryptophan + O2 = N-formyl-L-kynurenine. It participates in amino-acid degradation; L-tryptophan degradation via kynurenine pathway; L-kynurenine from L-tryptophan: step 1/2. Functionally, heme-dependent dioxygenase that catalyzes the oxidative cleavage of the L-tryptophan (L-Trp) pyrrole ring and converts L-tryptophan to N-formyl-L-kynurenine. Catalyzes the oxidative cleavage of the indole moiety. This is Tryptophan 2,3-dioxygenase from Anaeromyxobacter sp. (strain K).